The following is a 460-amino-acid chain: ESX-1 secretion-associated protein EspB (460 aa).

3 disordered regions span residues 92–116, 303–335, and 405–441; these read LDNDGEGTVQAESAGAVGGDSSAEL, PSDGSGVTPGTGMPAAPMVPPTGSPGGGLPADT, and LGGGGMGMPMGAAHQGQGGAKSKGSQQEDEALYTEDR.

Post-translationally, cleaved in the C-terminal region by MycP1.

The protein resides in the secreted. The sequence is that of ESX-1 secretion-associated protein EspB from Mycobacterium tuberculosis (strain CDC 1551 / Oshkosh).